The following is a 216-amino-acid chain: Kynurenine formamidase (216 aa).

Residue F21 participates in substrate binding. The Zn(2+) site is built by H51, H55, and D57. Residue H61 is the Proton donor/acceptor of the active site. Zn(2+) is bound by residues H167 and E179.

Belongs to the Cyclase 1 superfamily. KynB family. In terms of assembly, homodimer. Zn(2+) is required as a cofactor.

The enzyme catalyses N-formyl-L-kynurenine + H2O = L-kynurenine + formate + H(+). Its pathway is amino-acid degradation; L-tryptophan degradation via kynurenine pathway; L-kynurenine from L-tryptophan: step 2/2. In terms of biological role, catalyzes the hydrolysis of N-formyl-L-kynurenine to L-kynurenine, the second step in the kynurenine pathway of tryptophan degradation. The sequence is that of Kynurenine formamidase from Paracidovorax citrulli (strain AAC00-1) (Acidovorax citrulli).